A 184-amino-acid polypeptide reads, in one-letter code: ATP synthase subunit delta (184 aa).

The protein belongs to the ATPase delta chain family. As to quaternary structure, F-type ATPases have 2 components, F(1) - the catalytic core - and F(0) - the membrane proton channel. F(1) has five subunits: alpha(3), beta(3), gamma(1), delta(1), epsilon(1). F(0) has three main subunits: a(1), b(2) and c(10-14). The alpha and beta chains form an alternating ring which encloses part of the gamma chain. F(1) is attached to F(0) by a central stalk formed by the gamma and epsilon chains, while a peripheral stalk is formed by the delta and b chains.

It is found in the cell membrane. In terms of biological role, f(1)F(0) ATP synthase produces ATP from ADP in the presence of a proton or sodium gradient. F-type ATPases consist of two structural domains, F(1) containing the extramembraneous catalytic core and F(0) containing the membrane proton channel, linked together by a central stalk and a peripheral stalk. During catalysis, ATP synthesis in the catalytic domain of F(1) is coupled via a rotary mechanism of the central stalk subunits to proton translocation. Its function is as follows. This protein is part of the stalk that links CF(0) to CF(1). It either transmits conformational changes from CF(0) to CF(1) or is implicated in proton conduction. This Rickettsia africae (strain ESF-5) protein is ATP synthase subunit delta.